Here is a 598-residue protein sequence, read N- to C-terminus: Integrator complex subunit 11 (598 aa).

The Zn(2+) site is built by H68, H70, D72, H73, H157, and D178. Positions 68–73 match the HXHXDH motif motif; the sequence is HFHLDH. Residue E203 is part of the active site. Zn(2+) is bound at residue H414. A Nuclear localization signal motif is present at residues 470–480; it reads PLPDAKRPRTM.

It belongs to the metallo-beta-lactamase superfamily. RNA-metabolizing metallo-beta-lactamase-like family. INTS11 subfamily. In terms of assembly, component of the Integrator complex, composed of core subunits INTS1, INTS2, INTS3, INTS4, INTS5, INTS6, INTS7, INTS8, INTS9/RC74, INTS10, INTS11/CPSF3L, INTS12, INTS13, INTS14 and INTS15. The core complex associates with protein phosphatase 2A subunits PPP2CA and PPP2R1A, to form the Integrator-PP2A (INTAC) complex. INTS11 is part of the RNA endonuclease subcomplex, composed of INTS4, INTS9, INTS11 and inositol hexakisphosphate (InsP6). Requires Zn(2+) as cofactor.

The protein localises to the nucleus. It is found in the cytoplasm. In terms of biological role, RNA endonuclease component of the integrator complex, a multiprotein complex that terminates RNA polymerase II (Pol II) transcription in the promoter-proximal region of genes. The integrator complex provides a quality checkpoint during transcription elongation by driving premature transcription termination of transcripts that are unfavorably configured for transcriptional elongation: the complex terminates transcription by (1) catalyzing dephosphorylation of the C-terminal domain (CTD) of Pol II subunit POLR2A/RPB1 and SUPT5H/SPT5, (2) degrading the exiting nascent RNA transcript via endonuclease activity and (3) promoting the release of Pol II from bound DNA. The integrator complex is also involved in terminating the synthesis of non-coding Pol II transcripts, such as enhancer RNAs (eRNAs), small nuclear RNAs (snRNAs), telomerase RNAs and long non-coding RNAs (lncRNAs). Within the integrator complex, INTS11 constitutes the RNA endonuclease subunit that degrades exiting nascent RNA transcripts. This chain is Integrator complex subunit 11 (cpsf3l), found in Danio rerio (Zebrafish).